Reading from the N-terminus, the 447-residue chain is N-succinylarginine dihydrolase (447 aa).

Substrate is bound by residues 19–28 (AGLSFGNEAS), Asn110, and 137–138 (HR). Residue Glu174 is part of the active site. Residue Arg213 participates in substrate binding. His249 is a catalytic residue. 2 residues coordinate substrate: Asp251 and Asn364. The active-site Nucleophile is Cys370.

Belongs to the succinylarginine dihydrolase family. Homodimer.

It carries out the reaction N(2)-succinyl-L-arginine + 2 H2O + 2 H(+) = N(2)-succinyl-L-ornithine + 2 NH4(+) + CO2. Its pathway is amino-acid degradation; L-arginine degradation via AST pathway; L-glutamate and succinate from L-arginine: step 2/5. Its function is as follows. Catalyzes the hydrolysis of N(2)-succinylarginine into N(2)-succinylornithine, ammonia and CO(2). The protein is N-succinylarginine dihydrolase of Yersinia enterocolitica serotype O:8 / biotype 1B (strain NCTC 13174 / 8081).